Reading from the N-terminus, the 891-residue chain is Alanine--tRNA ligase (891 aa).

Residues H564, H568, C677, and H681 each contribute to the Zn(2+) site.

Belongs to the class-II aminoacyl-tRNA synthetase family. Zn(2+) serves as cofactor.

It localises to the cytoplasm. The enzyme catalyses tRNA(Ala) + L-alanine + ATP = L-alanyl-tRNA(Ala) + AMP + diphosphate. Its function is as follows. Catalyzes the attachment of alanine to tRNA(Ala) in a two-step reaction: alanine is first activated by ATP to form Ala-AMP and then transferred to the acceptor end of tRNA(Ala). Also edits incorrectly charged Ser-tRNA(Ala) and Gly-tRNA(Ala) via its editing domain. The polypeptide is Alanine--tRNA ligase (Bradyrhizobium sp. (strain ORS 278)).